Reading from the N-terminus, the 392-residue chain is MAQREWVEKDFYKELGVSSDASPEEIKRAYRKLARDLHPDANPDNPAAGERFKAVSEAHNVLSDPAKRKEYDETRRLFAGGGFGGRRFDTGGFGGFNVGGDGAEFNLNDLFDAAGRSGGTNIGDLFGGLFGRASGGRPSRPRRGNDLETETQLDFVEAAKGVAMPLRLTSPAPCTNCHGSGARPGTSPKVCPTCNGSGVISRNQGAFGFSEPCTDCRGSGSIIEHPCDECKGTGVTTRTRTINVRIPPGVEDGQRIRLPGQGEAGLRGAPSGDLYVTVHVRPHKVFGRDGDDLTVTVPVSFTELALGSTISVPTLDGKVGVRVPKGTADGRILRVRGRGVPKRSGGHGDLLVTVKVAVPPNLDGAAQEALEAYAAAERASGFDPRAGWAGNR.

The J domain maps to 10 to 75; it reads DFYKELGVSS…AKRKEYDETR (66 aa). The CR-type zinc finger occupies 161–239; that stretch reads GVAMPLRLTS…CKGTGVTTRT (79 aa). Positions 174, 177, 191, 194, 213, 216, 227, and 230 each coordinate Zn(2+). CXXCXGXG motif repeat units follow at residues 174-181, 191-198, 213-220, and 227-234; these read CTNCHGSG, CPTCNGSG, CTDCRGSG, and CDECKGTG.

It belongs to the DnaJ family. In terms of assembly, homodimer. Zn(2+) serves as cofactor.

Its subcellular location is the cytoplasm. Functionally, participates actively in the response to hyperosmotic and heat shock by preventing the aggregation of stress-denatured proteins and by disaggregating proteins, also in an autonomous, DnaK-independent fashion. Unfolded proteins bind initially to DnaJ; upon interaction with the DnaJ-bound protein, DnaK hydrolyzes its bound ATP, resulting in the formation of a stable complex. GrpE releases ADP from DnaK; ATP binding to DnaK triggers the release of the substrate protein, thus completing the reaction cycle. Several rounds of ATP-dependent interactions between DnaJ, DnaK and GrpE are required for fully efficient folding. Also involved, together with DnaK and GrpE, in the DNA replication of plasmids through activation of initiation proteins. This chain is Chaperone protein DnaJ 2, found in Mycolicibacterium paratuberculosis (strain ATCC BAA-968 / K-10) (Mycobacterium paratuberculosis).